The primary structure comprises 320 residues: Glutaminase (320 aa).

Positions 70, 121, 165, 172, 196, 248, and 266 each coordinate substrate.

This sequence belongs to the glutaminase family. In terms of assembly, homotetramer.

The catalysed reaction is L-glutamine + H2O = L-glutamate + NH4(+). This is Glutaminase from Mycobacterium marinum (strain ATCC BAA-535 / M).